The sequence spans 491 residues: Cytochrome P450 2F5 (491 aa).

Residue Cys436 coordinates heme.

This sequence belongs to the cytochrome P450 family. Heme is required as a cofactor.

The protein localises to the endoplasmic reticulum membrane. It is found in the microsome membrane. It catalyses the reaction an organic molecule + reduced [NADPH--hemoprotein reductase] + O2 = an alcohol + oxidized [NADPH--hemoprotein reductase] + H2O + H(+). Cytochromes P450 are a group of heme-thiolate monooxygenases. In liver microsomes, this enzyme is involved in an NADPH-dependent electron transport pathway. It oxidizes a variety of structurally unrelated compounds, including steroids, fatty acids, and xenobiotics. In Gorilla gorilla gorilla (Western lowland gorilla), this protein is Cytochrome P450 2F5 (CYP2F5).